Reading from the N-terminus, the 390-residue chain is Probable tRNA sulfurtransferase (390 aa).

Residues 58 to 161 enclose the THUMP domain; the sequence is EAVARRLQRV…DEGAYIYSRI (104 aa). Residues 179–180, 204–205, Arg-261, Gly-283, and Gln-292 contribute to the ATP site; these read LI and HF.

This sequence belongs to the ThiI family.

It localises to the cytoplasm. It carries out the reaction [ThiI sulfur-carrier protein]-S-sulfanyl-L-cysteine + a uridine in tRNA + 2 reduced [2Fe-2S]-[ferredoxin] + ATP + H(+) = [ThiI sulfur-carrier protein]-L-cysteine + a 4-thiouridine in tRNA + 2 oxidized [2Fe-2S]-[ferredoxin] + AMP + diphosphate. The enzyme catalyses [ThiS sulfur-carrier protein]-C-terminal Gly-Gly-AMP + S-sulfanyl-L-cysteinyl-[cysteine desulfurase] + AH2 = [ThiS sulfur-carrier protein]-C-terminal-Gly-aminoethanethioate + L-cysteinyl-[cysteine desulfurase] + A + AMP + 2 H(+). The protein operates within cofactor biosynthesis; thiamine diphosphate biosynthesis. Catalyzes the ATP-dependent transfer of a sulfur to tRNA to produce 4-thiouridine in position 8 of tRNAs, which functions as a near-UV photosensor. Also catalyzes the transfer of sulfur to the sulfur carrier protein ThiS, forming ThiS-thiocarboxylate. This is a step in the synthesis of thiazole, in the thiamine biosynthesis pathway. The sulfur is donated as persulfide by IscS. This Moorella thermoacetica (strain ATCC 39073 / JCM 9320) protein is Probable tRNA sulfurtransferase.